We begin with the raw amino-acid sequence, 228 residues long: Non-specific lipid-transfer protein EPAD1 (228 aa).

An N-terminal signal peptide occupies residues 1 to 24; the sequence is MERSHLAVLLGLLAFAAGVPAAAA. Cystine bridges form between cysteine 40/cysteine 62, cysteine 63/cysteine 105, and cysteine 78/cysteine 119. A glycan (N-linked (GlcNAc...) asparagine) is linked at asparagine 94. The interval 124–207 is disordered; the sequence is PPASIVTAPP…PPRSGASSSL (84 aa). A compositionally biased stretch (pro residues) spans 145–162; the sequence is REAPPPPPAAEKLSPPPQ.

The protein belongs to the plant LTP family. Expressed in young panicles. Specifically expressed in pollen mother cells and young microspores.

It is found in the cell membrane. In terms of biological role, plant non-specific lipid-transfer protein that binds phospholipids in vitro. Required for correct pollen exine patterning by controlling the continuity and homogeneity of the primexine distribution. The protein is Non-specific lipid-transfer protein EPAD1 of Oryza sativa subsp. japonica (Rice).